Reading from the N-terminus, the 536-residue chain is Putative ATP-dependent RNA helicase L364 (536 aa).

In terms of domain architecture, Helicase ATP-binding spans 47–214 (ISILLKYFLV…IPFYLMNFIP (168 aa)). ATP is bound at residue 60–67 (SDTGVGKT). The DEAH box signature appears at 160–163 (DESH). A coiled-coil region spans residues 288 to 334 (LSDDSDKIAEAYEEIAELMRELEEKKTQCKNHLAKIQKLKQEIELRK). The Helicase C-terminal domain maps to 338 to 486 (FIEQTQLYLE…ISAINDGDLE (149 aa)). The tract at residues 502–536 (VLNEPVNNPIEEPVNDPVKDPVEDLTDNQPNIVEV) is disordered.

This sequence belongs to the DEAD box helicase family. DEAH subfamily.

It carries out the reaction ATP + H2O = ADP + phosphate + H(+). This chain is Putative ATP-dependent RNA helicase L364, found in Acanthamoeba polyphaga (Amoeba).